The chain runs to 340 residues: tRNA N6-adenosine threonylcarbamoyltransferase (340 aa).

Fe cation is bound by residues H113 and H117. Residues 135–139 (LVSGG), D169, G182, D186, and N274 each bind substrate. A Fe cation-binding site is contributed by D302.

This sequence belongs to the KAE1 / TsaD family. It depends on Fe(2+) as a cofactor.

It is found in the cytoplasm. It carries out the reaction L-threonylcarbamoyladenylate + adenosine(37) in tRNA = N(6)-L-threonylcarbamoyladenosine(37) in tRNA + AMP + H(+). Required for the formation of a threonylcarbamoyl group on adenosine at position 37 (t(6)A37) in tRNAs that read codons beginning with adenine. Is involved in the transfer of the threonylcarbamoyl moiety of threonylcarbamoyl-AMP (TC-AMP) to the N6 group of A37, together with TsaE and TsaB. TsaD likely plays a direct catalytic role in this reaction. In Mycolicibacterium gilvum (strain PYR-GCK) (Mycobacterium gilvum (strain PYR-GCK)), this protein is tRNA N6-adenosine threonylcarbamoyltransferase.